The chain runs to 259 residues: Deoxyribose-phosphate aldolase (259 aa).

The active-site Proton donor/acceptor is the D102. K167 (schiff-base intermediate with acetaldehyde) is an active-site residue. Catalysis depends on K201, which acts as the Proton donor/acceptor.

This sequence belongs to the DeoC/FbaB aldolase family. DeoC type 2 subfamily.

Its subcellular location is the cytoplasm. The enzyme catalyses 2-deoxy-D-ribose 5-phosphate = D-glyceraldehyde 3-phosphate + acetaldehyde. Its pathway is carbohydrate degradation; 2-deoxy-D-ribose 1-phosphate degradation; D-glyceraldehyde 3-phosphate and acetaldehyde from 2-deoxy-alpha-D-ribose 1-phosphate: step 2/2. Its function is as follows. Catalyzes a reversible aldol reaction between acetaldehyde and D-glyceraldehyde 3-phosphate to generate 2-deoxy-D-ribose 5-phosphate. This Salmonella typhi protein is Deoxyribose-phosphate aldolase.